Reading from the N-terminus, the 205-residue chain is Endoribonuclease YbeY (205 aa).

Positions 124, 128, and 134 each coordinate Zn(2+). The tract at residues 162-205 (GTAPVAPGGEAQVPNEALETSGKRQDHSLGEILPGGMSRRLAGS) is disordered.

The protein belongs to the endoribonuclease YbeY family. It depends on Zn(2+) as a cofactor.

Its subcellular location is the cytoplasm. Single strand-specific metallo-endoribonuclease involved in late-stage 70S ribosome quality control and in maturation of the 3' terminus of the 16S rRNA. The polypeptide is Endoribonuclease YbeY (Beijerinckia indica subsp. indica (strain ATCC 9039 / DSM 1715 / NCIMB 8712)).